A 467-amino-acid polypeptide reads, in one-letter code: Zinc finger protein mex-6 (467 aa).

2 stretches are compositionally biased toward low complexity: residues 1–22 (MTAT…ATAQ) and 179–195 (STTR…LPTS). Disordered stretches follow at residues 1–35 (MTAT…QQHP) and 163–209 (TNPQ…NRNS). Threonine 190 bears the Phosphothreonine mark. The segment covering 196 to 207 (REYETVQRDRNR) has biased composition (basic and acidic residues). C3H1-type zinc fingers lie at residues 273 to 302 (NFKT…HGLK) and 317 to 347 (KYKT…HPSD). A disordered region spans residues 425 to 451 (INENDLPPHLRRIRRGNPPVTRSRPSF). Serine 457 is modified (phosphoserine).

Interacts (probably when phosphorylated on Thr-190) with plk-1 (via POLO box domain) and plk-2 (via POLO box domain). Phosphorylation on Ser-457 by par-1 promotes localization of the protein to the anterior cytoplasm of the zygote.

It localises to the cytoplasm. In terms of biological role, functions with mex-5 to affect embryonic viability, establish soma germline asymmetry in embryos and establish plk-1, pie-1, mex-1, and pos-1 asymmetry in embryos. Also affects formation of intestinal cells. In Caenorhabditis elegans, this protein is Zinc finger protein mex-6 (mex-6).